A 446-amino-acid chain; its full sequence is Peptide chain release factor 1, mitochondrial (446 aa).

The N-terminal 62 residues, M1–C62, are a transit peptide targeting the mitochondrion. Residues P298 to I362 form a GGQ domain region. The GGQ signature appears at G312 to Q314. An N5-methylglutamine modification is found at Q314.

It belongs to the prokaryotic/mitochondrial release factor family. Methylation of glutamine in the GGQ triplet by HEMK1 is conserved from bacteria to mammals.

The protein resides in the mitochondrion. Mitochondrial peptide chain release factor that directs the termination of translation in response to the peptide chain non-canonical stop codons AGG and AGA. Non-canonical termination codons AGG and AGA are found at the end of MT-CO1/COX1 and MT-ND6/ND6 open reading frames, respectively. Recognizes non-canonical stop codons via a network of interactions between the codon, MTRF1 and the ribosomal RNA (rRNA): in contrast to other translation release factors, which identify the codon in the A-site via direct interactions of amino acid side chains with the bases, MTRF1 repositions the first 2 bases of the stop codon to use an intricate network of interactions that includes residues of the release factor, the rRNA of the small ribosomal subunit, as well as neighboring bases of the mRNA. This chain is Peptide chain release factor 1, mitochondrial, found in Mus musculus (Mouse).